Here is a 367-residue protein sequence, read N- to C-terminus: DNA replication and repair protein RecF (367 aa).

ATP is bound at residue Gly30–Thr37.

The protein belongs to the RecF family.

The protein resides in the cytoplasm. Functionally, the RecF protein is involved in DNA metabolism; it is required for DNA replication and normal SOS inducibility. RecF binds preferentially to single-stranded, linear DNA. It also seems to bind ATP. In Pseudomonas fluorescens (strain SBW25), this protein is DNA replication and repair protein RecF.